The sequence spans 216 residues: Somatotropin (216 aa).

The N-terminal stretch at 1-26 is a signal peptide; the sequence is MATGSQTSWLLTFTLLCLPWPQEAGA. H45 is a binding site for Zn(2+). C78 and C189 are oxidised to a cystine. At S131 the chain carries Phosphoserine. Position 198 (E198) interacts with Zn(2+). A disulfide bridge connects residues C206 and C214.

The protein belongs to the somatotropin/prolactin family.

The protein localises to the secreted. Plays an important role in growth control. Its major role in stimulating body growth is to stimulate the liver and other tissues to secrete IGF1. It stimulates both the differentiation and proliferation of myoblasts. It also stimulates amino acid uptake and protein synthesis in muscle and other tissues. The sequence is that of Somatotropin (GH1) from Spalax ehrenbergi (Middle East blind mole rat).